Here is a 192-residue protein sequence, read N- to C-terminus: Probable nicotinate-nucleotide adenylyltransferase (192 aa).

This sequence belongs to the NadD family.

The catalysed reaction is nicotinate beta-D-ribonucleotide + ATP + H(+) = deamido-NAD(+) + diphosphate. Its pathway is cofactor biosynthesis; NAD(+) biosynthesis; deamido-NAD(+) from nicotinate D-ribonucleotide: step 1/1. Its function is as follows. Catalyzes the reversible adenylation of nicotinate mononucleotide (NaMN) to nicotinic acid adenine dinucleotide (NaAD). In Bradyrhizobium sp. (strain ORS 278), this protein is Probable nicotinate-nucleotide adenylyltransferase.